The chain runs to 56 residues: Prokaryotic ubiquitin-like protein UBact (56 aa).

The disordered stretch occupies residues 1–56 (MPERIVKPMPQDPVTKPGDEGPRTPNVPKPDTERLLERMRRVDPRQAQRYRQRSGE). Residues 30–46 (PDTERLLERMRRVDPRQ) are compositionally biased toward basic and acidic residues. An Isoglutamyl lysine isopeptide (Glu-Lys) (interchain with K-? in acceptor proteins) cross-link involves residue glutamate 56.

Belongs to the ubiquitin-like protein UBact family.

May function as a protein modifier covalently attached to lysine residues of substrate proteins. This may serve to target the modified proteins for degradation by proteasomes. This chain is Prokaryotic ubiquitin-like protein UBact, found in Acetithermum autotrophicum.